The chain runs to 208 residues: MSIVNIRNIELLNNPAKFDDPYNFRIKFEAIAPLVEDLDWRLIYVGSASSEEFDQELDNCSVGPIPAGINAFDFSAPAPAHHLLPSVEPDEILGVTVIIITASYREKEFVRVGYYVNTYYEDEELKENPPSVVQWDKLHRNVLIEKPKVTRFQNNWDSAPQLNTFDGQQPAAELPPSGGNPELFNAPLPPPVQRATAAGGMDVDQPMA.

The interval 162 to 208 (LNTFDGQQPAAELPPSGGNPELFNAPLPPPVQRATAAGGMDVDQPMA) is disordered.

This sequence belongs to the ASF1 family. Interacts with histone H3 and histone H4.

The protein resides in the nucleus. In terms of biological role, histone chaperone that facilitates histone deposition and histone exchange and removal during nucleosome assembly and disassembly. The polypeptide is Histone chaperone ASF1 (ASF1) (Cryptococcus neoformans var. neoformans serotype D (strain B-3501A) (Filobasidiella neoformans)).